The following is an 833-amino-acid chain: Zinc phosphodiesterase ELAC protein 2 homolog (833 aa).

A mitochondrion-targeting transit peptide spans 1-19; sequence MLGAIARKTVENRILVSRH. The segment covering 624 to 646 has biased composition (pro residues); the sequence is LTPPGSPGGPPGKRPRLPSPHLP. Positions 624 to 652 are disordered; that stretch reads LTPPGSPGGPPGKRPRLPSPHLPPSRDVL.

This sequence belongs to the RNase Z family. As to quaternary structure, homodimer. Requires Zn(2+) as cofactor. Highly expressed in the germline.

It localises to the mitochondrion. The protein localises to the nucleus. It carries out the reaction Endonucleolytic cleavage of RNA, removing extra 3' nucleotides from tRNA precursor, generating 3' termini of tRNAs. A 3'-hydroxy group is left at the tRNA terminus and a 5'-phosphoryl group is left at the trailer molecule.. In terms of biological role, zinc phosphodiesterase, which displays some tRNA 3'-processing endonuclease activity. Probably involved in tRNA maturation, by removing a 3'-trailer from precursor tRNA. Involved in germline proliferation. May be required for both mitosis and meiosis in germ cells. Functionally, does not regulate the mitochondrial unfolded protein response following mitochondrial stress. Plays a role in mitochondrial unfolded protein response. Upon mitochondrial stress is exported from the nucleus where its tRNA endonuclease activity is negatively regulated. In response to mitochondrial stress, might be involved in activating a transcriptional response in an ATFS-1- and DVE-1-dependent manner. May play a role in negatively regulating the mitochondrial membrane potential. This is Zinc phosphodiesterase ELAC protein 2 homolog from Caenorhabditis elegans.